The sequence spans 453 residues: Glutamyl-tRNA reductase (453 aa).

Substrate is bound by residues 54-57, Ser-113, 118-120, and Gln-124; these read TCNR and EAQ. Cys-55 (nucleophile) is an active-site residue. Residue 193–198 coordinates NADP(+); it reads GGGEVS.

It belongs to the glutamyl-tRNA reductase family. Homodimer.

The catalysed reaction is (S)-4-amino-5-oxopentanoate + tRNA(Glu) + NADP(+) = L-glutamyl-tRNA(Glu) + NADPH + H(+). It participates in porphyrin-containing compound metabolism; protoporphyrin-IX biosynthesis; 5-aminolevulinate from L-glutamyl-tRNA(Glu): step 1/2. The protein operates within porphyrin-containing compound metabolism; chlorophyll biosynthesis. Its function is as follows. Catalyzes the NADPH-dependent reduction of glutamyl-tRNA(Glu) to glutamate 1-semialdehyde (GSA). This is Glutamyl-tRNA reductase from Chloroflexus aggregans (strain MD-66 / DSM 9485).